The following is a 435-amino-acid chain: Cyclin-J-like protein (435 aa).

The region spanning 14–191 is the Cyclin N-terminal domain; it reads DVHCTLREKE…LLEAFSWNLC (178 aa). The disordered stretch occupies residues 120–142; sequence SSNSPASAPHPPPTPPQVAETTG.

This sequence belongs to the cyclin family. Cyclin J subfamily.

The protein is Cyclin-J-like protein (CCNJL) of Homo sapiens (Human).